The sequence spans 65 residues: Protein translocase subunit SecE (65 aa).

Residues 1–34 (MEKLRKFFREVIAEAKKISWPSRKELLTSFGVVL) are Cytoplasmic-facing. The helical transmembrane segment at 35–51 (VILAVTSVYFFVLDFIF) threads the bilayer. The Extracellular portion of the chain corresponds to 52–65 (SGVVSAIFKALGIG).

Belongs to the SecE/SEC61-gamma family. As to quaternary structure, component of the Sec protein translocase complex. Heterotrimer consisting of SecY, SecE and SecG subunits. The heterotrimers can form oligomers, although 1 heterotrimer is thought to be able to translocate proteins. Interacts with SecDF, and other proteins may be involved. The channel interacts with SecA via subunit SecY.

It localises to the cell inner membrane. Its function is as follows. Essential subunit of the protein translocation channel SecYEG. Clamps together the 2 halves of SecY. May contact the channel plug during translocation. The sequence is that of Protein translocase subunit SecE from Thermotoga maritima (strain ATCC 43589 / DSM 3109 / JCM 10099 / NBRC 100826 / MSB8).